Reading from the N-terminus, the 132-residue chain is Small ribosomal subunit protein uS8 (132 aa).

This sequence belongs to the universal ribosomal protein uS8 family. As to quaternary structure, part of the 30S ribosomal subunit. Contacts proteins S5 and S12.

Functionally, one of the primary rRNA binding proteins, it binds directly to 16S rRNA central domain where it helps coordinate assembly of the platform of the 30S subunit. The protein is Small ribosomal subunit protein uS8 of Bacillus cytotoxicus (strain DSM 22905 / CIP 110041 / 391-98 / NVH 391-98).